Consider the following 335-residue polypeptide: NADH-quinone oxidoreductase subunit H (335 aa).

8 helical membrane-spanning segments follow: residues 11-31 (VILT…AGAL), 81-101 (VIFT…FAII), 114-134 (IGLL…LFAG), 154-174 (VSYE…VGSF), 187-207 (LWFI…GVAV), 238-258 (FFVG…TLFF), 270-290 (QLSF…FILL), and 307-327 (WKFC…VVLW).

It belongs to the complex I subunit 1 family. In terms of assembly, NDH-1 is composed of 13 different subunits. Subunits NuoA, H, J, K, L, M, N constitute the membrane sector of the complex.

The protein resides in the cell inner membrane. It catalyses the reaction a quinone + NADH + 5 H(+)(in) = a quinol + NAD(+) + 4 H(+)(out). Its function is as follows. NDH-1 shuttles electrons from NADH, via FMN and iron-sulfur (Fe-S) centers, to quinones in the respiratory chain. The immediate electron acceptor for the enzyme in this species is believed to be ubiquinone. Couples the redox reaction to proton translocation (for every two electrons transferred, four hydrogen ions are translocated across the cytoplasmic membrane), and thus conserves the redox energy in a proton gradient. This subunit may bind ubiquinone. In Pseudomonas fluorescens (strain ATCC BAA-477 / NRRL B-23932 / Pf-5), this protein is NADH-quinone oxidoreductase subunit H.